Consider the following 401-residue polypeptide: MRNIIVKELNQTYIEDIDIEIVERKGIGHPDSISDGIGETVSEALCKMYMDELGGVLHHNTDEVQITAGESNPVFGGGKILKPIDILLTGRGVSEYDGIKFPLDRVAIEAAKNFLDDTIINLDVELDTVVECKIGHGSGDLVDVFKREGAPSSNDTSFGVGYAPFSETETLVKATEELLNSKPFKAKHPAVGEDIKVMGLREGEKITLTIGCAMVSKFVANREEYIAVREELKDIVSDLATKYTNREVEVFVNTADNDDATDESGYYLTVTGTSAEMGDDGSVGRGNRANGLITPCRPMSMEASSGKNPINHVGKIYNILSNEIAKDVVENVEGIKQMNVMILSQIGKPIDQPKAASTQVILEDGVKLEDVDKKVEQIVDRWLEDISIITENVVQGKTRTF.

135 to 140 lines the ATP pocket; that stretch reads GHGSGD.

It belongs to the AdoMet synthase 2 family. Mg(2+) is required as a cofactor.

The catalysed reaction is L-methionine + ATP + H2O = S-adenosyl-L-methionine + phosphate + diphosphate. The protein operates within amino-acid biosynthesis; S-adenosyl-L-methionine biosynthesis; S-adenosyl-L-methionine from L-methionine: step 1/1. Functionally, catalyzes the formation of S-adenosylmethionine from methionine and ATP. The protein is S-adenosylmethionine synthase of Methanobrevibacter smithii (strain ATCC 35061 / DSM 861 / OCM 144 / PS).